Here is a 413-residue protein sequence, read N- to C-terminus: Serine/threonine-protein phosphatase 2A 55 kDa regulatory subunit B beta isoform (413 aa).

WD repeat units follow at residues 1–31, 57–98, 141–179, and 190–230; these read EFNH…KNQV, EIEE…KRPE, AHTY…QSFN, and ELTE…LCDR. Phosphoserine is present on S245. 3 WD repeats span residues 249-287, 304-345, and 380-412; these read EIIS…RPIE, ENDC…DVTL, and DFSK…QDKV. At Y265 the chain carries Phosphotyrosine. T268 bears the Phosphothreonine mark.

The protein belongs to the phosphatase 2A regulatory subunit B family. In terms of assembly, PP2A consists of a common heterodimeric core enzyme, composed of a 36 kDa catalytic subunit (subunit C) and a 65 kDa constant regulatory subunit (PR65 or subunit A), that associates with a variety of regulatory subunits. Proteins that associate with the core dimer include three families of regulatory subunits B (the R2/B/PR55/B55, R3/B''/PR72/PR130/PR59 and R5/B'/B56 families), the 48 kDa variable regulatory subunit, viral proteins, and cell signaling molecules. Interacts with TOMM22. Interacts with IER5 (via N- and C-terminal regions). In terms of tissue distribution, brain.

It localises to the cytoplasm. It is found in the cytoskeleton. The protein localises to the membrane. In terms of biological role, the B regulatory subunit might modulate substrate selectivity and catalytic activity, and might also direct the localization of the catalytic enzyme to a particular subcellular compartment. This is Serine/threonine-protein phosphatase 2A 55 kDa regulatory subunit B beta isoform (PPP2R2B) from Oryctolagus cuniculus (Rabbit).